The primary structure comprises 155 residues: Regulatory protein RecX (155 aa).

Belongs to the RecX family.

It is found in the cytoplasm. Modulates RecA activity. In Vibrio campbellii (strain ATCC BAA-1116), this protein is Regulatory protein RecX.